Reading from the N-terminus, the 388-residue chain is MTSVSLGMPAAPPPVLAPRRKTRQIKVGSVGVGSDSPISVQSMTTTPTTDINATLQQIAELTASGCDIVRVACPSADDAEALPIIARKSQIPVIADIHFQPKYVFAAIEAGCAAVRVNPGNIRKFDDQVKEIAAAARDHGTSIRIGVNAGSLEPGIMKKYGKATPEALVESAVWEASLFEEHGFHDFKISVKHNDPVIMVAAYEMLAEKGDWPLHLGVTEAGPAFQGTIKSATAFGALLSRGIGDTIRVSLSAPPVEEIKVGNQILQSLNLRPRKLEIVSCPSCGRAQVDVYTLAEQVTAGLEGMEIPLRVAVMGCVVNGPGEAREADLGVASGNGKGQIFVKGEVIKTVPESEIVETLIEEAMRIAEEMGEADGEDAVKGSPVVSVS.

[4Fe-4S] cluster-binding residues include C281, C284, C316, and E323.

It belongs to the IspG family. It depends on [4Fe-4S] cluster as a cofactor.

It carries out the reaction (2E)-4-hydroxy-3-methylbut-2-enyl diphosphate + oxidized [flavodoxin] + H2O + 2 H(+) = 2-C-methyl-D-erythritol 2,4-cyclic diphosphate + reduced [flavodoxin]. It participates in isoprenoid biosynthesis; isopentenyl diphosphate biosynthesis via DXP pathway; isopentenyl diphosphate from 1-deoxy-D-xylulose 5-phosphate: step 5/6. Its function is as follows. Converts 2C-methyl-D-erythritol 2,4-cyclodiphosphate (ME-2,4cPP) into 1-hydroxy-2-methyl-2-(E)-butenyl 4-diphosphate. This is 4-hydroxy-3-methylbut-2-en-1-yl diphosphate synthase (flavodoxin) from Paenarthrobacter aurescens (strain TC1).